Consider the following 392-residue polypeptide: Alkaline phosphatase L (392 aa).

An N-terminal signal peptide occupies residues 1-23 (MYKRSLIAASLSVAALVSAQAMA).

The protein belongs to the PstS family. In terms of assembly, homodimer.

It localises to the secreted. The protein localises to the periplasm. The enzyme catalyses a phosphate monoester + H2O = an alcohol + phosphate. Functionally, has both a phosphomonoesterase and phosphodiesterase activity. The chain is Alkaline phosphatase L from Pseudomonas aeruginosa (strain UCBPP-PA14).